The sequence spans 228 residues: Protein ARV 2 (228 aa).

Helical transmembrane passes span 37 to 57 (EVAD…LILH) and 80 to 100 (LLWK…LLLR). N-linked (GlcNAc...) asparagine glycosylation occurs at N107. 3 helical membrane passes run 123–143 (VLSA…LMLV), 150–170 (ILLT…MPVW), and 176–196 (VIFI…KVMT).

It belongs to the ARV1 family. Restricted to tissues in which cells are actively dividing or expanding. Mostly expressed in roots and flowers, and, to a lower extent, in stems and leaves.

The protein resides in the endoplasmic reticulum membrane. In terms of biological role, mediator of sterol homeostasis involved in sterol uptake, trafficking and distribution into membranes. Also regulates the sphingolipid metabolism. This chain is Protein ARV 2, found in Arabidopsis thaliana (Mouse-ear cress).